Reading from the N-terminus, the 337-residue chain is DNA-directed RNA polymerase subunit alpha (337 aa).

An alpha N-terminal domain (alpha-NTD) region spans residues 1-233 (MIQKNWQELI…DQLALFINFK (233 aa)). The interval 249 to 337 (FNPALLKKVD…DLAKRYEDQY (89 aa)) is alpha C-terminal domain (alpha-CTD).

It belongs to the RNA polymerase alpha chain family. Homodimer. The RNAP catalytic core consists of 2 alpha, 1 beta, 1 beta' and 1 omega subunit. When a sigma factor is associated with the core the holoenzyme is formed, which can initiate transcription.

The enzyme catalyses RNA(n) + a ribonucleoside 5'-triphosphate = RNA(n+1) + diphosphate. Functionally, DNA-dependent RNA polymerase catalyzes the transcription of DNA into RNA using the four ribonucleoside triphosphates as substrates. This chain is DNA-directed RNA polymerase subunit alpha, found in Bartonella henselae (strain ATCC 49882 / DSM 28221 / CCUG 30454 / Houston 1) (Rochalimaea henselae).